The following is a 309-amino-acid chain: Neuropeptide-like 1 (309 aa).

The N-terminal stretch at 1-28 is a signal peptide; it reads MQAVLQSAHSSRRLMLLLSMLLNAAIQP. A propeptide spanning residues 29 to 99 is cleaved from the precursor; sequence RSIIVSATDD…GEYPDYLEED (71 aa). A disordered region spans residues 126–147; sequence GQLPTAEPGEDYGDADSGEPSE. The segment covering 133–144 has biased composition (acidic residues); sequence PGEDYGDADSGE. Y164 is modified (tyrosine amide). N182 bears the Asparagine amide mark.

MTYamide peptide: Expressed in the larval CNS (at protein level). NAP peptide: Expressed in the larval CNS (at protein level). IPNamide peptide: Expressed in the ventral ganglion of the third larval instar and adult brain (at protein level).

It localises to the secreted. Acts as a ligand for the receptor-type guanylate cyclase Gyc76C. Stimulates Gyc76c-dependent cGMP production and modulates the IMD innate immune pathway in response to salt stress by inducing nuclear translocation of NF-kappa-B protein Rel which leads to increased expression of the antimicrobial peptide diptericin. Does not appear to play a role in Gyc76C-mediated wing development. The chain is Neuropeptide-like 1 (Nplp1) from Drosophila melanogaster (Fruit fly).